A 125-amino-acid polypeptide reads, in one-letter code: Protein ApaG (125 aa).

One can recognise an ApaG domain in the interval 1–125; the sequence is MINAPRVCVQ…FRLAIPSLIH (125 aa).

The protein is Protein ApaG of Pectobacterium atrosepticum (strain SCRI 1043 / ATCC BAA-672) (Erwinia carotovora subsp. atroseptica).